The primary structure comprises 451 residues: uncharacterized protein (451 aa).

Positions 1–18 (MRTRITLALAVLLLLLAG) are cleaved as a signal peptide. Cys19 is lipidated: N-palmitoyl cysteine. Residue Cys19 is the site of S-diacylglycerol cysteine attachment. The disordered stretch occupies residues 424-451 (TSADPPPGVPRAGKRNIRDATSRLPSTP).

It localises to the cell membrane. In terms of biological role, may participate in oleandomycin glycosylation and secretion during antibiotic production. This is an uncharacterized protein from Streptomyces antibioticus.